A 391-amino-acid polypeptide reads, in one-letter code: Elongation factor Tu (391 aa).

A tr-type G domain is found at 10–201; sequence KPHVNIGTIG…AVDEYIPTPA (192 aa). Residues 19–26 form a G1 region; the sequence is GHVDHGKT. A GTP-binding site is contributed by 19–26; the sequence is GHVDHGKT. T26 serves as a coordination point for Mg(2+). Residues 55–59 form a G2 region; it reads GITIS. The segment at 76–79 is G3; sequence DCPG. GTP is bound by residues 76–80 and 131–134; these read DCPGH and NKVD. The interval 131–134 is G4; the sequence is NKVD. Residues 169–171 are G5; sequence SAL.

Belongs to the TRAFAC class translation factor GTPase superfamily. Classic translation factor GTPase family. EF-Tu/EF-1A subfamily. In terms of assembly, monomer.

It localises to the cytoplasm. The catalysed reaction is GTP + H2O = GDP + phosphate + H(+). Functionally, GTP hydrolase that promotes the GTP-dependent binding of aminoacyl-tRNA to the A-site of ribosomes during protein biosynthesis. The chain is Elongation factor Tu from Ruegeria pomeroyi (strain ATCC 700808 / DSM 15171 / DSS-3) (Silicibacter pomeroyi).